The following is a 59-amino-acid chain: Large ribosomal subunit protein bL32 (59 aa).

The protein belongs to the bacterial ribosomal protein bL32 family.

In Anaeromyxobacter dehalogenans (strain 2CP-C), this protein is Large ribosomal subunit protein bL32.